The primary structure comprises 85 residues: Phosphocarrier protein HPr (85 aa).

Residues 1–85 (MFQKEIKINA…HLSKIMTELE (85 aa)) enclose the HPr domain. His15 functions as the Pros-phosphohistidine intermediate in the catalytic mechanism.

This sequence belongs to the HPr family.

It localises to the cytoplasm. Functionally, general (non sugar-specific) component of the phosphoenolpyruvate-dependent sugar phosphotransferase system (sugar PTS). This major carbohydrate active-transport system catalyzes the phosphorylation of incoming sugar substrates concomitantly with their translocation across the cell membrane. The phosphoryl group from phosphoenolpyruvate (PEP) is transferred to the phosphoryl carrier protein HPr by enzyme I. Phospho-HPr then transfers it to the PTS EIIA domain. This Buchnera aphidicola subsp. Schizaphis graminum (strain Sg) protein is Phosphocarrier protein HPr (ptsH).